A 99-amino-acid polypeptide reads, in one-letter code: Class II hydrophobin 3 (99 aa).

The N-terminal stretch at 1–18 (MRIDILATAALLAQLASA) is a signal peptide. Cystine bridges form between Cys31–Cys79, Cys40–Cys70, and Cys41–Cys53.

Belongs to the cerato-ulmin hydrophobin family. In terms of assembly, homodimer. Homodimers further self-assemble to form highly ordered films at water-air interfaces through intermolecular interactions.

It localises to the secreted. It is found in the cell wall. Its function is as follows. Aerial growth, conidiation, and dispersal of filamentous fungi in the environment rely upon a capability of their secreting small amphipathic proteins called hydrophobins (HPBs) with low sequence identity. Class I can self-assemble into an outermost layer of rodlet bundles on aerial cell surfaces, conferring cellular hydrophobicity that supports fungal growth, development and dispersal; whereas Class II form highly ordered films at water-air interfaces through intermolecular interactions but contribute nothing to the rodlet structure. Hyd3 is a class II hydrophobin required for barley root colonization. Hyd1 and Hyd3 are jointly required for conidial hydrophobicity and dispersal, but seem not to be involved in mycelia hydrophobicity. Inhibits conidial germination in environments not suitable for mycelial growth. Plays probably a role in intraspecific signaling or hyphal fusion. This is Class II hydrophobin 3 from Bionectria ochroleuca (Gliocladium roseum).